A 99-amino-acid chain; its full sequence is A-type ATP synthase subunit F (99 aa).

The protein belongs to the V-ATPase F subunit family. In terms of assembly, has multiple subunits with at least A(3), B(3), C, D, E, F, H, I and proteolipid K(x).

The protein resides in the cell membrane. Its function is as follows. Component of the A-type ATP synthase that produces ATP from ADP in the presence of a proton gradient across the membrane. In Methanococcus maripaludis (strain C7 / ATCC BAA-1331), this protein is A-type ATP synthase subunit F.